Reading from the N-terminus, the 202-residue chain is Dephospho-CoA kinase (202 aa).

The region spanning 3–202 (IFGLTGGIGS…ISHRSKYLSC (200 aa)) is the DPCK domain. ATP is bound at residue 11–16 (GSGKSL).

Belongs to the CoaE family.

The protein resides in the cytoplasm. The enzyme catalyses 3'-dephospho-CoA + ATP = ADP + CoA + H(+). Its pathway is cofactor biosynthesis; coenzyme A biosynthesis; CoA from (R)-pantothenate: step 5/5. In terms of biological role, catalyzes the phosphorylation of the 3'-hydroxyl group of dephosphocoenzyme A to form coenzyme A. The polypeptide is Dephospho-CoA kinase (Ehrlichia chaffeensis (strain ATCC CRL-10679 / Arkansas)).